Here is a 158-residue protein sequence, read N- to C-terminus: 6,7-dimethyl-8-ribityllumazine synthase (158 aa).

Residues Phe-23, 61-63 (SFE), and 85-87 (AVI) contribute to the 5-amino-6-(D-ribitylamino)uracil site. 90 to 91 (ET) contacts (2S)-2-hydroxy-3-oxobutyl phosphate. The active-site Proton donor is the His-93. A 5-amino-6-(D-ribitylamino)uracil-binding site is contributed by Phe-118. Position 132 (Arg-132) interacts with (2S)-2-hydroxy-3-oxobutyl phosphate.

This sequence belongs to the DMRL synthase family.

The enzyme catalyses (2S)-2-hydroxy-3-oxobutyl phosphate + 5-amino-6-(D-ribitylamino)uracil = 6,7-dimethyl-8-(1-D-ribityl)lumazine + phosphate + 2 H2O + H(+). It participates in cofactor biosynthesis; riboflavin biosynthesis; riboflavin from 2-hydroxy-3-oxobutyl phosphate and 5-amino-6-(D-ribitylamino)uracil: step 1/2. Catalyzes the formation of 6,7-dimethyl-8-ribityllumazine by condensation of 5-amino-6-(D-ribitylamino)uracil with 3,4-dihydroxy-2-butanone 4-phosphate. This is the penultimate step in the biosynthesis of riboflavin. The protein is 6,7-dimethyl-8-ribityllumazine synthase of Prochlorococcus marinus subsp. pastoris (strain CCMP1986 / NIES-2087 / MED4).